The primary structure comprises 275 residues: UBX domain-containing protein 8 (275 aa).

Met-1 is a topological domain (cytoplasmic). The chain crosses the membrane as a helical span at residues 2-22; that stretch reads ASRGVVGIFLLSALPLLCLEL. Residues 23-33 lie on the Lumenal side of the membrane; sequence RRGKPDLGIKD. A helical membrane pass occupies residues 34-54; it reads LILLCGRIFLLLALLTLIISV. The Cytoplasmic segment spans residues 55–275; sequence TTSWVNSFKP…LNVEEKEQSS (221 aa). Positions 137–181 are disordered; that stretch reads DEDLELDSESQTSFETSNREAAKRRNLPNSVTNISPPAEQPTKKE. In terms of domain architecture, UBX spans 192–268; that stretch reads TAEEVVTVAL…GITVDTVLNV (77 aa).

Interacts with SYVN1 and VCP.

It is found in the endoplasmic reticulum membrane. Involved in endoplasmic reticulum-associated degradation (ERAD) for misfolded lumenal proteins, possibly by tethering VCP to the endoplasmic reticulum membrane. May play a role in reproduction. Its function is as follows. May play a role in reproduction. The sequence is that of UBX domain-containing protein 8 (UBXN8) from Bos taurus (Bovine).